Consider the following 363-residue polypeptide: Trichocyst matrix protein T4-B (363 aa).

A signal peptide spans 1–17; that stretch reads MARSLTILAIVFAVATA. Positions 18–52 are excised as a propeptide; the sequence is RVTKSESPKEILAQVNKDSFGNSILSVLQLQLATG. Residues 85–119 are a coiled coil; sequence VAFEKIIADLEQEIAYHQTQIVALSNLRDSTTEAL. Positions 190–221 are excised as a propeptide; that stretch reads RFEKVQAKLMESKHALFKPLINALTQLASKVD. A coiled-coil region spans residues 244 to 352; the sequence is ASLLATEERQ…EVLTQKLSAA (109 aa).

This sequence belongs to the TMP family. Post-translationally, two components are produced by post-translational processing from the precursor peptide.

It localises to the trichocyst. Functionally, structural protein that crystallize inside the trichocyst matrix. In Paramecium tetraurelia, this protein is Trichocyst matrix protein T4-B (T4B).